The sequence spans 246 residues: Bis(5'-nucleosyl)-tetraphosphatase PrpE [asymmetrical] (246 aa).

This sequence belongs to the PrpE family. Ni(2+) serves as cofactor.

The enzyme catalyses P(1),P(4)-bis(5'-guanosyl) tetraphosphate + H2O = GMP + GTP + 2 H(+). Functionally, asymmetrically hydrolyzes Ap4p to yield AMP and ATP. This chain is Bis(5'-nucleosyl)-tetraphosphatase PrpE [asymmetrical], found in Bacillus cereus (strain B4264).